The sequence spans 67 residues: Large ribosomal subunit protein bL31 (67 aa).

Zn(2+)-binding residues include cysteine 16, cysteine 18, cysteine 37, and cysteine 40.

Belongs to the bacterial ribosomal protein bL31 family. Type A subfamily. As to quaternary structure, part of the 50S ribosomal subunit. The cofactor is Zn(2+).

Binds the 23S rRNA. The polypeptide is Large ribosomal subunit protein bL31 (Methylococcus capsulatus (strain ATCC 33009 / NCIMB 11132 / Bath)).